A 225-amino-acid polypeptide reads, in one-letter code: U2 small nuclear ribonucleoprotein B'' (225 aa).

The 80-residue stretch at 7 to 86 (HTIYINNMND…KPMRIQYAKT (80 aa)) folds into the RRM 1 domain. Residues 100-144 (DKEKKKEKKKAKTMEQAAAAANKKPGQGTPNAANTQGTAAPNPQV) are disordered. K111 carries the N6-acetyllysine; alternate modification. A Glycyl lysine isopeptide (Lys-Gly) (interchain with G-Cter in SUMO2); alternate cross-link involves residue K111. Over residues 113 to 123 (MEQAAAAANKK) the composition is skewed to low complexity. Residues 127 to 140 (GTPNAANTQGTAAP) show a composition bias toward polar residues. Phosphotyrosine is present on Y151. The RRM 2 domain maps to 151 to 225 (YILFLNNLPE…HAMKITYAKK (75 aa)).

Belongs to the RRM U1 A/B'' family. Identified in the spliceosome B complex. Identified in the spliceosome C complex. Present in a spliceosome complex assembled in vitro, and composed of SNRPB2, HPRP8BP and CRNKL1. Contributes to the binding of stem loop IV of U2 snRNA with SNRPP1.

It localises to the nucleus. Involved in pre-mRNA splicing as component of the spliceosome. Associated with sn-RNP U2, where it contributes to the binding of stem loop IV of U2 snRNA. The chain is U2 small nuclear ribonucleoprotein B'' (Snrpb2) from Mus musculus (Mouse).